Consider the following 319-residue polypeptide: CCAAT/enhancer-binding protein homolog 1 (319 aa).

The n' domain; required for axon regeneration stretch occupies residues 53–67 (SLTIAASLQQRDRER). Positions 163–319 (TRRAVKRPVP…QRHILENFNK (157 aa)) are disordered. Basic and acidic residues predominate over residues 171–181 (VPYDDYQKEYS). Residues 182-198 (EESSDMTDNDGSVDDSY) show a composition bias toward acidic residues. Basic and acidic residues-rich tracts occupy residues 225-248 (LKAD…DAVR), 255-274 (KELQ…RIAE), 281-291 (SERDARRRDQD), and 302-319 (PMKE…NFNK). The bZIP domain maps to 233–308 (EPTYKLKRAR…NKGPMKEQRM (76 aa)). Residues 237–271 (KLKRARNNDAVRKSRKKAKELQDKKEAEHDKMKRR) form a basic motif region. A leucine-zipper region spans residues 275-308 (LEGLLQSERDARRRDQDTLEQLLRNKGPMKEQRM).

This sequence belongs to the bZIP family. C/EBP subfamily. May interact with transcription factor ets-4. May interact (via N-terminus) with nipi-3. May interact (via N-terminus) with importin subunit alpha ima-3. In terms of tissue distribution, expressed in touch and motor neurons.

It localises to the synapse. The protein localises to the cytoplasm. The protein resides in the nucleus. Its subcellular location is the cell projection. It is found in the axon. Its function is as follows. Transcription factor. Binds to promoter regions of target genes, perhaps at the motif 5'-[AGCT]TT[AGT][TC]GAAA[ACT]-3'. Modulates expression of genes involved in development and in stress responses, including those regulating the p38/MAPK signaling pathways such as MAPKK sek-1 and phosphatase vhp-1. Involved in innate immunity. Plays a role in repressing the response to infection by the Gram-negative bacterium P.aeruginosa, perhaps acting independently of the pmk-1 or pmk-3 p38/MAPK pathways. However, also plays a protective role in the response to infection by P.aeruginosa. Required in axonal regrowth following injury and synaptogenesis. Following axon injury, in concert with transcription factor ets-4, activates expression of receptor tyrosine kinase svh-2. May function downstream of the Ca2+-activated p38/MAPK pathway to promote axon regeneration. Plays a role in modulating polymerization of neuronal microtubules. Involved in modulating lipid homeostasis. The polypeptide is CCAAT/enhancer-binding protein homolog 1 (Caenorhabditis elegans).